We begin with the raw amino-acid sequence, 229 residues long: 7-cyano-7-deazaguanine synthase (229 aa).

7 to 17 is a binding site for ATP; sequence LSGGLDSTTVL. Residues cysteine 191, cysteine 204, cysteine 207, and cysteine 210 each coordinate Zn(2+).

It belongs to the QueC family. Requires Zn(2+) as cofactor.

It catalyses the reaction 7-carboxy-7-deazaguanine + NH4(+) + ATP = 7-cyano-7-deazaguanine + ADP + phosphate + H2O + H(+). The protein operates within purine metabolism; 7-cyano-7-deazaguanine biosynthesis. Catalyzes the ATP-dependent conversion of 7-carboxy-7-deazaguanine (CDG) to 7-cyano-7-deazaguanine (preQ(0)). In Cyanothece sp. (strain PCC 7425 / ATCC 29141), this protein is 7-cyano-7-deazaguanine synthase.